The chain runs to 272 residues: Phosphonates import ATP-binding protein PhnC (272 aa).

The region spanning 2–246 (LELQRLTKTY…VLATIYGAED (245 aa)) is the ABC transporter domain. 35–42 (GPSGAGKS) is an ATP binding site. The tract at residues 248-272 (ASSGREPAPEREPEDTERHLAEVGR) is disordered. The segment covering 254 to 272 (PAPEREPEDTERHLAEVGR) has biased composition (basic and acidic residues).

It belongs to the ABC transporter superfamily. Phosphonates importer (TC 3.A.1.9.1) family. In terms of assembly, the complex is composed of two ATP-binding proteins (PhnC), two transmembrane proteins (PhnE) and a solute-binding protein (PhnD).

The protein localises to the cell inner membrane. The catalysed reaction is phosphonate(out) + ATP + H2O = phosphonate(in) + ADP + phosphate + H(+). Functionally, part of the ABC transporter complex PhnCDE involved in phosphonates import. Responsible for energy coupling to the transport system. This Chromohalobacter salexigens (strain ATCC BAA-138 / DSM 3043 / CIP 106854 / NCIMB 13768 / 1H11) protein is Phosphonates import ATP-binding protein PhnC.